The chain runs to 108 residues: MATSKLQALWNHPAGPKTIHFWAPTFKWGISIANIADFQKPPETLSYPQQIVITGTGLVWSRYSTVITPKNWNLFSVSLGMAVTGIYQLTRKIKHDYVYEANSIVAKE.

The next 3 helical transmembrane spans lie at 19–35 (IHFW…IANI), 51–67 (IVIT…STVI), and 74–90 (LFSV…YQLT).

It belongs to the mitochondrial pyruvate carrier (MPC) (TC 2.A.105) family. As to expression, abundant in leaf and particularly in the guard cells.

Its subcellular location is the mitochondrion. The protein resides in the mitochondrion inner membrane. Its function is as follows. Mediates the uptake of pyruvate into mitochondria. Negatively regulates ABA-induced guard cell signaling and mediates drought stress responses. The polypeptide is Mitochondrial pyruvate carrier 3 (Arabidopsis thaliana (Mouse-ear cress)).